Here is a 143-residue protein sequence, read N- to C-terminus: Large ribosomal subunit protein uL11 (143 aa).

The protein belongs to the universal ribosomal protein uL11 family. In terms of assembly, part of the ribosomal stalk of the 50S ribosomal subunit. Interacts with L10 and the large rRNA to form the base of the stalk. L10 forms an elongated spine to which L12 dimers bind in a sequential fashion forming a multimeric L10(L12)X complex. In terms of processing, one or more lysine residues are methylated.

Functionally, forms part of the ribosomal stalk which helps the ribosome interact with GTP-bound translation factors. This Burkholderia cenocepacia (strain HI2424) protein is Large ribosomal subunit protein uL11.